Consider the following 309-residue polypeptide: Ribonuclease Z (309 aa).

His63, His65, Asp67, His68, His141, Asp208, and His266 together coordinate Zn(2+). Catalysis depends on Asp67, which acts as the Proton acceptor.

It belongs to the RNase Z family. In terms of assembly, homodimer. The cofactor is Zn(2+).

The catalysed reaction is Endonucleolytic cleavage of RNA, removing extra 3' nucleotides from tRNA precursor, generating 3' termini of tRNAs. A 3'-hydroxy group is left at the tRNA terminus and a 5'-phosphoryl group is left at the trailer molecule.. Its function is as follows. Zinc phosphodiesterase, which displays some tRNA 3'-processing endonuclease activity. Probably involved in tRNA maturation, by removing a 3'-trailer from precursor tRNA. The protein is Ribonuclease Z of Salinispora arenicola (strain CNS-205).